A 114-amino-acid chain; its full sequence is ATP synthase subunit c (114 aa).

2 helical membrane passes run 31-51 (AVFY…AAGG) and 88-108 (IETF…TGIF).

Belongs to the ATPase C chain family. As to quaternary structure, F-type ATPases have 2 components, F(1) - the catalytic core - and F(0) - the membrane proton channel. F(1) has five subunits: alpha(3), beta(3), gamma(1), delta(1), epsilon(1). F(0) has three main subunits: a(1), b(2) and c(10-14). The alpha and beta chains form an alternating ring which encloses part of the gamma chain. F(1) is attached to F(0) by a central stalk formed by the gamma and epsilon chains, while a peripheral stalk is formed by the delta and b chains.

It is found in the cell inner membrane. In terms of biological role, f(1)F(0) ATP synthase produces ATP from ADP in the presence of a proton or sodium gradient. F-type ATPases consist of two structural domains, F(1) containing the extramembraneous catalytic core and F(0) containing the membrane proton channel, linked together by a central stalk and a peripheral stalk. During catalysis, ATP synthesis in the catalytic domain of F(1) is coupled via a rotary mechanism of the central stalk subunits to proton translocation. Key component of the F(0) channel; it plays a direct role in translocation across the membrane. A homomeric c-ring of between 10-14 subunits forms the central stalk rotor element with the F(1) delta and epsilon subunits. This chain is ATP synthase subunit c, found in Sulfurihydrogenibium sp. (strain YO3AOP1).